The following is a 352-amino-acid chain: UDP-N-acetylglucosamine--N-acetylmuramyl-(pentapeptide) pyrophosphoryl-undecaprenol N-acetylglucosamine transferase 2 (352 aa).

UDP-N-acetyl-alpha-D-glucosamine-binding positions include 11 to 13 (SAG), R164, S194, and Q289.

This sequence belongs to the glycosyltransferase 28 family. MurG subfamily.

The protein resides in the cell membrane. The catalysed reaction is di-trans,octa-cis-undecaprenyl diphospho-N-acetyl-alpha-D-muramoyl-L-alanyl-D-glutamyl-meso-2,6-diaminopimeloyl-D-alanyl-D-alanine + UDP-N-acetyl-alpha-D-glucosamine = di-trans,octa-cis-undecaprenyl diphospho-[N-acetyl-alpha-D-glucosaminyl-(1-&gt;4)]-N-acetyl-alpha-D-muramoyl-L-alanyl-D-glutamyl-meso-2,6-diaminopimeloyl-D-alanyl-D-alanine + UDP + H(+). Its pathway is cell wall biogenesis; peptidoglycan biosynthesis. Cell wall formation. Catalyzes the transfer of a GlcNAc subunit on undecaprenyl-pyrophosphoryl-MurNAc-pentapeptide (lipid intermediate I) to form undecaprenyl-pyrophosphoryl-MurNAc-(pentapeptide)GlcNAc (lipid intermediate II). This chain is UDP-N-acetylglucosamine--N-acetylmuramyl-(pentapeptide) pyrophosphoryl-undecaprenol N-acetylglucosamine transferase 2, found in Bacillus anthracis.